The primary structure comprises 185 residues: Ribosome-recycling factor (185 aa).

It belongs to the RRF family.

It localises to the cytoplasm. Responsible for the release of ribosomes from messenger RNA at the termination of protein biosynthesis. May increase the efficiency of translation by recycling ribosomes from one round of translation to another. This is Ribosome-recycling factor from Shouchella clausii (strain KSM-K16) (Alkalihalobacillus clausii).